The sequence spans 448 residues: N-succinylarginine dihydrolase (448 aa).

Substrate-binding positions include 19–28 (AGLSSGNIAS), Asn110, and 137–138 (HR). Glu174 is an active-site residue. Substrate is bound at residue Arg216. His252 is a catalytic residue. Substrate-binding residues include Asp254 and Asn366. Cys372 serves as the catalytic Nucleophile.

The protein belongs to the succinylarginine dihydrolase family. Homodimer.

It carries out the reaction N(2)-succinyl-L-arginine + 2 H2O + 2 H(+) = N(2)-succinyl-L-ornithine + 2 NH4(+) + CO2. The protein operates within amino-acid degradation; L-arginine degradation via AST pathway; L-glutamate and succinate from L-arginine: step 2/5. Its function is as follows. Catalyzes the hydrolysis of N(2)-succinylarginine into N(2)-succinylornithine, ammonia and CO(2). This chain is N-succinylarginine dihydrolase, found in Legionella pneumophila (strain Corby).